A 428-amino-acid chain; its full sequence is Serine--tRNA ligase (428 aa).

An L-serine-binding site is contributed by 235–237 (TAE). 266–268 (RSE) is an ATP binding site. L-serine is bound at residue Glu289. Residue 353 to 356 (EISS) coordinates ATP. L-serine is bound at residue Ser389.

Belongs to the class-II aminoacyl-tRNA synthetase family. Type-1 seryl-tRNA synthetase subfamily. In terms of assembly, homodimer. The tRNA molecule binds across the dimer.

The protein resides in the cytoplasm. It carries out the reaction tRNA(Ser) + L-serine + ATP = L-seryl-tRNA(Ser) + AMP + diphosphate + H(+). It catalyses the reaction tRNA(Sec) + L-serine + ATP = L-seryl-tRNA(Sec) + AMP + diphosphate + H(+). It functions in the pathway aminoacyl-tRNA biosynthesis; selenocysteinyl-tRNA(Sec) biosynthesis; L-seryl-tRNA(Sec) from L-serine and tRNA(Sec): step 1/1. Functionally, catalyzes the attachment of serine to tRNA(Ser). Is also able to aminoacylate tRNA(Sec) with serine, to form the misacylated tRNA L-seryl-tRNA(Sec), which will be further converted into selenocysteinyl-tRNA(Sec). The sequence is that of Serine--tRNA ligase from Shewanella sp. (strain W3-18-1).